We begin with the raw amino-acid sequence, 224 residues long: Small ribosomal subunit protein uS5 (224 aa).

A disordered region spans residues 1–40; the sequence is MAEQPAGGQGAGDSRDSRGDRDSRGRRGDGGRGGRDRDGD. The span at 13–40 shows a compositional bias: basic and acidic residues; the sequence is DSRDSRGDRDSRGRRGDGGRGGRDRDGD. One can recognise an S5 DRBM domain in the interval 44-107; sequence YLERVVAINR…EEARKGFFRV (64 aa).

Belongs to the universal ribosomal protein uS5 family. In terms of assembly, part of the 30S ribosomal subunit. Contacts proteins S4 and S8.

Functionally, with S4 and S12 plays an important role in translational accuracy. Located at the back of the 30S subunit body where it stabilizes the conformation of the head with respect to the body. The sequence is that of Small ribosomal subunit protein uS5 from Mycolicibacterium paratuberculosis (strain ATCC BAA-968 / K-10) (Mycobacterium paratuberculosis).